Reading from the N-terminus, the 92-residue chain is Large ribosomal subunit protein bL25 (92 aa).

Belongs to the bacterial ribosomal protein bL25 family. As to quaternary structure, part of the 50S ribosomal subunit; part of the 5S rRNA/L5/L18/L25 subcomplex. Contacts the 5S rRNA. Binds to the 5S rRNA independently of L5 and L18.

This is one of the proteins that binds to the 5S RNA in the ribosome where it forms part of the central protuberance. The protein is Large ribosomal subunit protein bL25 of Aliivibrio fischeri (strain ATCC 700601 / ES114) (Vibrio fischeri).